A 400-amino-acid polypeptide reads, in one-letter code: MLELTTQDIQLQQHFANKQAAIQGLAHALTAKGLVAEGYAQGMLNREAQHSTYLGNGIAIPHGTTDTRELVKQTGVTAMHFPQGLDWGDGNLVYVAIGIAAKSDEHLGILKQLTRVLSADGVEQALQQAKTAQQIIAIIKGEAQLTADFDASLIQLQFPASDMVQMSAVAGGLLKNTGCAENEFVADLVTKAPTHLGRGLWLVASDRAVKRTGMSIVTTANHCEYEQQAVKALIAFSVCNDVHQPLLNTITQCVFEQKQDQLLQADVQQLLNLFSGNAEQTIAQRTIAVGTITEETIAAETVAEPDSARAHTATFRIKNSHGLHARPGAMLVAEAKKFESNIRVSNLDGDGQVVNAKSLMKVIALGVKHNHQLQFTAEGPDAEAALQALGVAINAGLGEG.

The PTS EIIA type-2 domain maps to 2-142; it reads LELTTQDIQL…QQIIAIIKGE (141 aa). The active-site Tele-phosphohistidine intermediate; for EIIA activity is H62. H62 carries the post-translational modification Phosphohistidine; by HPr. The 91-residue stretch at 310–400 folds into the HPr domain; it reads AHTATFRIKN…VAINAGLGEG (91 aa). The active-site Pros-phosphohistidine intermediate; for HPr activity is H324. A Phosphohistidine; by EI modification is found at H324.

The protein resides in the cytoplasm. Functionally, the phosphoenolpyruvate-dependent sugar phosphotransferase system (sugar PTS), a major carbohydrate active transport system, catalyzes the phosphorylation of incoming sugar substrates concomitantly with their translocation across the cell membrane. The enzyme II FruAB PTS system is involved in fructose transport. The protein is Multiphosphoryl transfer protein of Vibrio cholerae serotype O1 (strain ATCC 39315 / El Tor Inaba N16961).